A 463-amino-acid chain; its full sequence is tRNA-2-methylthio-N(6)-dimethylallyladenosine synthase (463 aa).

The MTTase N-terminal domain occupies 19–135 (GSYWITTFGC…LESLLNQVDS (117 aa)). Cys-28, Cys-64, Cys-98, Cys-170, Cys-174, and Cys-177 together coordinate [4Fe-4S] cluster. The Radical SAM core domain maps to 156–393 (RDSSFCGWVN…NSLVENIAKE (238 aa)). Residues 396-463 (QRYKNTSQEI…RPFSLTAKLL (68 aa)) enclose the TRAM domain.

This sequence belongs to the methylthiotransferase family. MiaB subfamily. In terms of assembly, monomer. The cofactor is [4Fe-4S] cluster.

It is found in the cytoplasm. The catalysed reaction is N(6)-dimethylallyladenosine(37) in tRNA + (sulfur carrier)-SH + AH2 + 2 S-adenosyl-L-methionine = 2-methylsulfanyl-N(6)-dimethylallyladenosine(37) in tRNA + (sulfur carrier)-H + 5'-deoxyadenosine + L-methionine + A + S-adenosyl-L-homocysteine + 2 H(+). Functionally, catalyzes the methylthiolation of N6-(dimethylallyl)adenosine (i(6)A), leading to the formation of 2-methylthio-N6-(dimethylallyl)adenosine (ms(2)i(6)A) at position 37 in tRNAs that read codons beginning with uridine. The sequence is that of tRNA-2-methylthio-N(6)-dimethylallyladenosine synthase from Prochlorococcus marinus (strain NATL1A).